The chain runs to 182 residues: Prorelaxin (182 aa).

The first 24 residues, 1-24 (MPRLFSYLLGVWLLLSQLPREIPG), serve as a signal peptide directing secretion. Q25 is modified (pyrrolidone carboxylic acid). 3 cysteine pairs are disulfide-bonded: C34–C169, C46–C182, and C168–C173. Residues 57 to 154 (SLEEPQLETG…LKNLGLDKHS (98 aa)) constitute a propeptide, connecting peptide. The propeptide occupies 159 to 160 (LF).

The protein belongs to the insulin family. Heterodimer of a B chain and an A chain linked by two disulfide bonds.

It is found in the secreted. In terms of biological role, relaxin is an ovarian hormone that acts with estrogen to produce dilatation of the birth canal in many mammals. The protein is Prorelaxin (RLN) of Sus scrofa (Pig).